The sequence spans 207 residues: uncharacterized protein (207 aa).

S-adenosyl-L-methionine contacts are provided by G51 and D72.

It belongs to the methyltransferase superfamily. YrrT family.

Functionally, could be a S-adenosyl-L-methionine-dependent methyltransferase. This is an uncharacterized protein from Staphylococcus carnosus (strain TM300).